We begin with the raw amino-acid sequence, 311 residues long: tRNA-cytidine(32) 2-sulfurtransferase (311 aa).

Positions 47-52 (SGGKDS) match the PP-loop motif motif. 3 residues coordinate [4Fe-4S] cluster: Cys-122, Cys-125, and Cys-213.

This sequence belongs to the TtcA family. As to quaternary structure, homodimer. Mg(2+) is required as a cofactor. It depends on [4Fe-4S] cluster as a cofactor.

The protein resides in the cytoplasm. It catalyses the reaction cytidine(32) in tRNA + S-sulfanyl-L-cysteinyl-[cysteine desulfurase] + AH2 + ATP = 2-thiocytidine(32) in tRNA + L-cysteinyl-[cysteine desulfurase] + A + AMP + diphosphate + H(+). It functions in the pathway tRNA modification. Catalyzes the ATP-dependent 2-thiolation of cytidine in position 32 of tRNA, to form 2-thiocytidine (s(2)C32). The sulfur atoms are provided by the cysteine/cysteine desulfurase (IscS) system. This chain is tRNA-cytidine(32) 2-sulfurtransferase, found in Escherichia coli O81 (strain ED1a).